The sequence spans 426 residues: Glutamyl-tRNA reductase (426 aa).

Substrate contacts are provided by residues T49–R52, S101, E106–Q108, and Q112. The active-site Nucleophile is the C50. G181–I186 provides a ligand contact to NADP(+). The segment at R405–R426 is disordered.

This sequence belongs to the glutamyl-tRNA reductase family. Homodimer.

It catalyses the reaction (S)-4-amino-5-oxopentanoate + tRNA(Glu) + NADP(+) = L-glutamyl-tRNA(Glu) + NADPH + H(+). It functions in the pathway porphyrin-containing compound metabolism; protoporphyrin-IX biosynthesis; 5-aminolevulinate from L-glutamyl-tRNA(Glu): step 1/2. In terms of biological role, catalyzes the NADPH-dependent reduction of glutamyl-tRNA(Glu) to glutamate 1-semialdehyde (GSA). The protein is Glutamyl-tRNA reductase of Xanthomonas axonopodis pv. citri (strain 306).